Consider the following 4043-residue polypeptide: Hybrid PKS-NRPS synthetase thnA (4043 aa).

The Ketosynthase family 3 (KS3) domain maps to 6-440 (LEPIAIVGSA…GSNAHAILEE (435 aa)). Active-site for beta-ketoacyl synthase activity residues include C179, H319, and H360. Positions 558 to 894 (VFTGQGAQWA…FSDALGFVWT (337 aa)) are malonyl-CoA:ACP transacylase (MAT) domain. Residues 952-1090 (HEILGTILPE…ATVKIILGTP (139 aa)) form an N-terminal hotdog fold region. Residues 952 to 1256 (HEILGTILPE…LSIKTFAPAT (305 aa)) form a dehydratase (DH) domain region. Residues 952–1258 (HEILGTILPE…IKTFAPATQA (307 aa)) form the PKS/mFAS DH domain. H984 acts as the Proton acceptor; for dehydratase activity in catalysis. Positions 1105–1258 (LFPIDADRFY…IKTFAPATQA (154 aa)) are C-terminal hotdog fold. Catalysis depends on D1166, which acts as the Proton donor; for dehydratase activity. Positions 1417–1591 (LASMMKQITH…RKAGFAGVDA (175 aa)) are methyltransferase (MT) domain. The segment at 2146–2320 (TYLLVGLTGK…GSTFDIGQVA (175 aa)) is ketoreductase (KR) domain. Residues 2434-2512 (EQALDILKEC…ELCDRVVDKL (79 aa)) form the Carrier 1 domain. An O-(pantetheine 4'-phosphoryl)serine modification is found at S2472. The interval 2521 to 2618 (GKQGESQPPA…PPPPEPAVER (98 aa)) is disordered. Over residues 2527-2536 (QPPASTAQPQ) the composition is skewed to low complexity. Residues 2537–2547 (PVAPKPKPLPV) are compositionally biased toward pro residues. Polar residues predominate over residues 2578 to 2605 (YSATEASTRSGSPSEATRLSQKVSSKLQ). A condensation (C) domain region spans residues 2626-3067 (IKSVPISLGQ…IPRFSEKQLA (442 aa)). The interval 3092–3496 (QVARENPDKV…GTMVFHSRMA (405 aa)) is adenylation (A) domain. Positions 3614–3695 (TELTETMIQL…EMAQKVEETI (82 aa)) constitute a Carrier 2 domain. At S3655 the chain carries O-(pantetheine 4'-phosphoryl)serine. Residues 3736–3954 (ITGATGFLSK…DMLPAVLTAQ (219 aa)) form a reductase (R) domain region.

In the C-terminal section; belongs to the NRP synthetase family.

The enzyme catalyses malate + 6 malonyl-CoA + acetyl-CoA + 2 AH2 + 2 S-adenosyl-L-methionine + 5 NADPH + 9 H(+) = trihazone A + 2 A + 2 S-adenosyl-L-homocysteine + 6 CO2 + 5 NADP(+) + 7 CoA + 6 H2O. The protein operates within secondary metabolite biosynthesis. Its function is as follows. Hybrid PKS-NRPS synthetase; part of the gene cluster that produces the tetronate natural products trihazones. The PKS-NRPS synthetase thnA with the help of the trans-enoyl reductase thnE are responsible for the synthesis of the carboxylmethyl containing trihazone A. The PKS portion of thnA synthesizes beta-keto-triene chain from one acetyl-CoA and 6 equivalents of malonyl-CoA, in collaboration with thnE, which selectively reduces the enoyl intermediate during the first and fourth iteration of the PKS. The NRPS domain selects and activates malate, of which the alpha-hydroxyl group attacks the completed polyketide acyl-S-ACP chain to form the ester product. Intramolecular Dieckmann cyclization catalyzed by the terminal reductase domain releases the product as trihazone A from the PKS-NPRS. The pathway begins with the formation of trihazone A by the hybrid PKS-NRPS synthetase thnA and the trans-enoyl reductase thnE. Trihazone A is further decarboxylated by the 2-oxoglutarate-dependent dioxygenase thnC to produce trihazone D. The function of the FAD-dependent monooxygenase thnD has still to be identified. The chain is Hybrid PKS-NRPS synthetase thnA from Trichoderma harzianum (Hypocrea lixii).